The following is a 560-amino-acid chain: MVWALTPVDTVRGAQRCYIFAAGTYKVGRKDCDVIVQTDTSISRVHAEIVVEKMVAWDPQSGAPANPSYVRVVDRSKYGTFFNKVQGTQGSRLHKDEDAMLADGDTVTFGTGNATFRLSFVPIVVFFHGKKSGRISPCLQAVMTSIGAYATRKWSDECTHVLVDESCSLTPELLDAVLAKKQIVLGDWFKVMAEKNIHTEMPSSTQYIPKLTLDGMEIQVVEIKLIESCLAGYTFILGSSEKYKFGDKLHALLESTGAKYLHVDEFCANSQDSGAGENDKDILLVPAKSPLEFSKIRGLFPLSKITDVKLFAAILSGHLEATAIEPPAYIVASSNSTDETIVVDSDVEIDTATSDHTVAASKSEHHIEHISDDKKEVVAISEEDAVNLVEAKTSINLHSDQEKDEIVKPMEEDVKVIEKTATMRGFKVEGEDIPVMTKVPKDETLDSRDETCHVIYTQNLVVKSILQSARAESIETGGINFKRFRKRGAVSGNSFKDLIPYSREPYRESDYERGTVTDFMREEKKRRQMEAIAEDLFNNAKPKKKAAAGSSIHTMLTGRR.

Residues 25–87 (YKVGRKDCDV…YGTFFNKVQG (63 aa)) form the FHA domain. A BRCT domain is found at 115–190 (TFRLSFVPIV…KQIVLGDWFK (76 aa)).

The protein belongs to the Nibrin family. Component of the MRN complex composed of two heterodimers RAD50 and MRE11 associated with a single NBS1. In terms of tissue distribution, mostly expressed in the shoot apex and young flower, but also in young leaves, root tips and stamen, tissues where frequent cell division or meiosis may occur.

The protein localises to the nucleus. Its subcellular location is the chromosome. Component of the MRN complex, which plays a central role in double-strand break (DSB) repair, DNA recombination, maintenance of telomere integrity and meiosis. The MRN complex is involved in the repair of DNA double-strand breaks (DSBs) via homologous recombination (HR), an error-free mechanism which primarily occurs during S and G2 phases. The complex (1) mediates the end resection of damaged DNA, which generates proper single-stranded DNA, a key initial steps in HR, and is (2) required for the recruitment of other repair factors and efficient activation of ATM and ATR upon DNA damage. The MRN complex possesses single-strand endonuclease activity and double-strand-specific 3'-5' exonuclease activity, which are provided by MRE11, to initiate end resection, which is required for single-strand invasion and recombination. Within the MRN complex, NBS1 acts as a protein-protein adapter, which specifically recognizes and binds phosphorylated proteins, promoting their recruitment to DNA damage sites. Recruits MRE11 and RAD50 components of the MRN complex to DSBs in response to DNA damage. The polypeptide is Nibrin homolog (Oryza sativa subsp. japonica (Rice)).